The chain runs to 734 residues: MAEQKSSNGGGGGGDVVINVPVEEASRRSKEMASPESEKGVPFSKSPSPEISKLVGSPNKPPRAPNQNNVGLTQRKSFARSVYSKPKSRFVDPSCPVDTSILEEEVREQLGAGFSFSRASPNNKSNRSVGSPAPVTPSKVVVEKDEDEEIYKKVKLNREMRSKISTLALIESAFFVVILSALVASLTINVLKHHTFWGLEVWKWCVLVMVIFSGMLVTNWFMRLIVFLIETNFLLRRKVLYFVHGLKKSVQVFIWLCLILVAWILLFNHDVKRSPAATKVLKCITRTLISILTGAFFWLVKTLLLKILAANFNVNNFFDRIQDSVFHQYVLQTLSGLPLMEEAERVGREPSTGHLSFATVVKKGTVKEKKVIDMGKVHKMKREKVSAWTMRVLMEAVRTSGLSTISDTLDETAYGEGKEQADREITSEMEALAAAYHVFRNVAQPFFNYIEEEDLLRFMIKEEVDLVFPLFDGAAETGRITRKAFTEWVVKVYTSRRALAHSLNDTKTAVKQLNKLVTAILMVVTVVIWLLLLEVATTKVLLFFSTQLVALAFIIGSTCKNLFESIVFVFVMHPYDVGDRCVVDGVAMLVEEMNLLTTVFLKLNNEKVYYPNAVLATKPISNYFRSPNMGETVEFSISFSTPVSKIAHLKERIAEYLEQNPQHWAPVHSVVVKEIENMNKLKMALYSDHTITFQENRERNLRRTELSLAIKRMLEDLHIDYTLLPQDINLTKKN.

2 disordered regions span residues 1–75 (MAEQ…LTQR) and 115–136 (SFSRASPNNKSNRSVGSPAPVT). A compositionally biased stretch (basic and acidic residues) spans 24-39 (EASRRSKEMASPESEK). Serine 34 carries the phosphoserine modification. Polar residues-rich tracts occupy residues 65 to 75 (PNQNNVGLTQR) and 117 to 129 (SRASPNNKSNRSV). 2 positions are modified to phosphoserine: serine 128 and serine 131. 6 helical membrane passes run 164 to 184 (ISTLALIESAFFVVILSALVA), 196 to 216 (FWGLEVWKWCVLVMVIFSGML), 249 to 269 (SVQVFIWLCLILVAWILLFNH), 288 to 308 (LISILTGAFFWLVKTLLLKIL), 516 to 536 (LVTAILMVVTVVIWLLLLEVA), and 551 to 571 (LAFIIGSTCKNLFESIVFVFV).

It belongs to the MscS (TC 1.A.23) family. As to expression, detected in the root tip and throughout the vasculature of the root and leaf.

Its subcellular location is the cell membrane. Its function is as follows. Mechanosensitive channel that opens in response to stretch forces in the membrane lipid bilayer. The chain is Mechanosensitive ion channel protein 10 (MSL10) from Arabidopsis thaliana (Mouse-ear cress).